The sequence spans 371 residues: Alanine dehydrogenase (371 aa).

Positions 15 and 75 each coordinate substrate. His-96 functions as the Proton donor/acceptor in the catalytic mechanism. NAD(+) contacts are provided by residues Ser-134, 178–179 (TA), Asp-198, Lys-203, Ser-220, 239–240 (VL), 267–270 (IAID), Arg-279, and 298–301 (VANM). The active-site Proton donor/acceptor is Asp-270. Mg(2+)-binding residues include Glu-323 and His-327.

Belongs to the AlaDH/PNT family. As to quaternary structure, homohexamer. Trimer of dimers. Requires Mg(2+) as cofactor.

Its subcellular location is the secreted. The catalysed reaction is L-alanine + NAD(+) + H2O = pyruvate + NH4(+) + NADH + H(+). It participates in amino-acid degradation; L-alanine degradation via dehydrogenase pathway; NH(3) and pyruvate from L-alanine: step 1/1. Functionally, catalyzes the reversible reductive amination of pyruvate to L-alanine. However, since the physiological environment of M.tuberculosis has a neutral pH, it can be assumed that the enzyme catalyzes exclusively the formation of L-alanine. May play a role in cell wall synthesis as L-alanine is an important constituent of the peptidoglycan layer. The polypeptide is Alanine dehydrogenase (ald) (Mycobacterium tuberculosis (strain CDC 1551 / Oshkosh)).